Consider the following 936-residue polypeptide: Myocardin-related transcription factor A (936 aa).

3 RPEL repeats span residues 15 to 40 (TVLQ…PPLK), 59 to 84 (DYLK…EETS), and 103 to 128 (DDLN…PVET). The Bipartite Nuclear localization signal signature appears at 62–100 (KRKIRSRPERAELVRMHILEETSAEPSLQAKQIKLKRAR). 3 disordered regions span residues 146–185 (SSFD…TQIP), 234–258 (SQPK…KVKK), and 401–422 (SQDP…QAKP). A compositionally biased stretch (polar residues) spans 160-170 (QPASQESQGSI). Positions 239–254 (SFEKSQRIKKPKEPKP) are enriched in basic and acidic residues. In terms of domain architecture, SAP spans 368-402 (LDEMKVAELKLELKHRGLPVSGTKIDLIERLKASQ). Over residues 404-416 (PSTATAASAKPTP) the composition is skewed to low complexity. The stretch at 497–542 (DARDKDLMLREKDRQIEELTQRLKQKQELVERLRQQLEQEKRTPQH) forms a coiled coil. Residues 707 to 755 (HNESPATPPQQPEPEPPPHSIFLTHSSPQWSKNPPGYDEAMKQQPNSCE) form a disordered region. The segment covering 712 to 725 (ATPPQQPEPEPPPH) has biased composition (pro residues). Over residues 729-738 (LTHSSPQWSK) the composition is skewed to polar residues.

In terms of assembly, interacts with srf, forming the srf-mrtfa nuclear complex which binds the 5'-CArG-3' consensus motif (CArG box) on DNA via srf. Interacts (via RPEL repeats) with globular actin (G-actin), thereby regulating its subcellular location and activity of the complex formed with srf.

The protein resides in the cytoplasm. It localises to the nucleus. In terms of biological role, transcription coactivator that associates with the serum response factor (srf) transcription factor to control expression of genes regulating the cytoskeleton during development, morphogenesis and cell migration. The srf-mrtfa complex activity responds to Rho GTPase-induced changes in cellular globular actin (G-actin) concentration, thereby coupling cytoskeletal gene expression to cytoskeletal dynamics. Mrtfa binds G-actin via its RPEL repeats, regulating activity of the mrtfa-srf complex. Activity is also regulated by filamentous actin (F-actin) in the nucleus. The sequence is that of Myocardin-related transcription factor A (mrtfa) from Xenopus laevis (African clawed frog).